A 225-amino-acid polypeptide reads, in one-letter code: Urease accessory protein UreG (225 aa).

Residue 25-32 (GPVGAGKT) participates in GTP binding.

The protein belongs to the SIMIBI class G3E GTPase family. UreG subfamily. In terms of assembly, homodimer. UreD, UreF and UreG form a complex that acts as a GTP-hydrolysis-dependent molecular chaperone, activating the urease apoprotein by helping to assemble the nickel containing metallocenter of UreC. The UreE protein probably delivers the nickel.

Its subcellular location is the cytoplasm. Facilitates the functional incorporation of the urease nickel metallocenter. This process requires GTP hydrolysis, probably effectuated by UreG. The protein is Urease accessory protein UreG of Haemophilus influenzae (strain ATCC 51907 / DSM 11121 / KW20 / Rd).